We begin with the raw amino-acid sequence, 342 residues long: S-adenosylmethionine:tRNA ribosyltransferase-isomerase (342 aa).

It belongs to the QueA family. As to quaternary structure, monomer.

The protein resides in the cytoplasm. The catalysed reaction is 7-aminomethyl-7-carbaguanosine(34) in tRNA + S-adenosyl-L-methionine = epoxyqueuosine(34) in tRNA + adenine + L-methionine + 2 H(+). It participates in tRNA modification; tRNA-queuosine biosynthesis. In terms of biological role, transfers and isomerizes the ribose moiety from AdoMet to the 7-aminomethyl group of 7-deazaguanine (preQ1-tRNA) to give epoxyqueuosine (oQ-tRNA). The protein is S-adenosylmethionine:tRNA ribosyltransferase-isomerase of Streptococcus pyogenes serotype M12 (strain MGAS2096).